The sequence spans 198 residues: tRNA (pseudouridine(54)-N(1))-methyltransferase (198 aa).

Leu128 contributes to the S-adenosyl-L-methionine binding site.

Belongs to the methyltransferase superfamily. TrmY family. Homodimer.

It localises to the cytoplasm. It carries out the reaction pseudouridine(54) in tRNA + S-adenosyl-L-methionine = N(1)-methylpseudouridine(54) in tRNA + S-adenosyl-L-homocysteine + H(+). Its function is as follows. Specifically catalyzes the N1-methylation of pseudouridine at position 54 (Psi54) in tRNAs. The chain is tRNA (pseudouridine(54)-N(1))-methyltransferase from Haloferax volcanii (strain ATCC 29605 / DSM 3757 / JCM 8879 / NBRC 14742 / NCIMB 2012 / VKM B-1768 / DS2) (Halobacterium volcanii).